The following is a 358-amino-acid chain: Phenylalanine--tRNA ligase alpha subunit (358 aa).

E258 contributes to the Mg(2+) binding site.

This sequence belongs to the class-II aminoacyl-tRNA synthetase family. Phe-tRNA synthetase alpha subunit type 1 subfamily. As to quaternary structure, tetramer of two alpha and two beta subunits. The cofactor is Mg(2+).

It is found in the cytoplasm. The catalysed reaction is tRNA(Phe) + L-phenylalanine + ATP = L-phenylalanyl-tRNA(Phe) + AMP + diphosphate + H(+). The sequence is that of Phenylalanine--tRNA ligase alpha subunit from Rhodospirillum centenum (strain ATCC 51521 / SW).